The primary structure comprises 166 residues: Mitochondrial fission process protein 1 (166 aa).

Transmembrane regions (helical) follow at residues 34 to 54 (SLVP…YVLA) and 78 to 98 (ALAV…IPGF). Lys-123 is subject to N6-succinyllysine. A helical membrane pass occupies residues 129–149 (LGLLAIPVIIHPIDRSVDFLL).

This sequence belongs to the MTFP1 family.

It is found in the mitochondrion inner membrane. Its function is as follows. Involved in the mitochondrial division probably by regulating membrane fission. Loss-of-function leads to apoptosis. The chain is Mitochondrial fission process protein 1 (Mtfp1) from Mus musculus (Mouse).